The primary structure comprises 131 residues: Global transcriptional regulator Spx 2 (131 aa).

Cys10 and Cys13 are oxidised to a cystine.

The protein belongs to the ArsC family. Spx subfamily. Interacts with the C-terminal domain of the alpha subunit of the RNAP.

Its subcellular location is the cytoplasm. Global transcriptional regulator that plays a key role in stress response and exerts either positive or negative regulation of genes. Acts by interacting with the C-terminal domain of the alpha subunit of the RNA polymerase (RNAP). This interaction can enhance binding of RNAP to the promoter region of target genes and stimulate their transcription, or block interaction of RNAP with activator. This chain is Global transcriptional regulator Spx 2, found in Bacillus cereus (strain ATCC 14579 / DSM 31 / CCUG 7414 / JCM 2152 / NBRC 15305 / NCIMB 9373 / NCTC 2599 / NRRL B-3711).